A 90-amino-acid chain; its full sequence is Co-chaperonin GroES (90 aa).

Belongs to the GroES chaperonin family. Heptamer of 7 subunits arranged in a ring. Interacts with the chaperonin GroEL.

It localises to the cytoplasm. Its function is as follows. Together with the chaperonin GroEL, plays an essential role in assisting protein folding. The GroEL-GroES system forms a nano-cage that allows encapsulation of the non-native substrate proteins and provides a physical environment optimized to promote and accelerate protein folding. GroES binds to the apical surface of the GroEL ring, thereby capping the opening of the GroEL channel. The polypeptide is Co-chaperonin GroES (Thermosipho melanesiensis (strain DSM 12029 / CIP 104789 / BI429)).